The chain runs to 443 residues: Amino-acid acetyltransferase (443 aa).

The N-acetyltransferase domain occupies 296–436; sequence EQIRRATIND…KMYNYQRRSK (141 aa).

The protein belongs to the acetyltransferase family. ArgA subfamily. In terms of assembly, homohexamer.

The protein resides in the cytoplasm. It catalyses the reaction L-glutamate + acetyl-CoA = N-acetyl-L-glutamate + CoA + H(+). It functions in the pathway amino-acid biosynthesis; L-arginine biosynthesis; N(2)-acetyl-L-ornithine from L-glutamate: step 1/4. This Salmonella arizonae (strain ATCC BAA-731 / CDC346-86 / RSK2980) protein is Amino-acid acetyltransferase.